A 128-amino-acid polypeptide reads, in one-letter code: Platelet basic protein (128 aa).

Residues 1 to 34 form the signal peptide; that stretch reads MSLRLDTTPSCNSARPLHALQVLLLLSLLLTALA. Intrachain disulfides connect Cys-63–Cys-89 and Cys-65–Cys-105.

The protein belongs to the intercrine alpha (chemokine CxC) family. As to quaternary structure, beta-thromboglobulin is a homotetramer. Proteolytic removal of residues 1-9 produces the active peptide connective tissue-activating peptide III (CTAP-III) (low-affinity platelet factor IV (LA-PF4)). In terms of processing, proteolytic removal of residues 1-13 produces the active peptide beta-thromboglobulin, which is released from platelets along with platelet factor 4 and platelet-derived growth factor. Post-translationally, NAP-2(1-66) is produced by proteolytical processing, probably after secretion by leukocytes other than neutrophils. NAP-2(73) and NAP-2(74) seem not be produced by proteolytical processing of secreted precursors but are released in an active form from platelets.

It localises to the secreted. Its function is as follows. LA-PF4 stimulates DNA synthesis, mitosis, glycolysis, intracellular cAMP accumulation, prostaglandin E2 secretion, and synthesis of hyaluronic acid and sulfated glycosaminoglycan. It also stimulates the formation and secretion of plasminogen activator by human synovial cells. NAP-2 is a ligand for CXCR1 and CXCR2, and NAP-2, NAP-2(73), NAP-2(74), NAP-2(1-66), and most potent NAP-2(1-63) are chemoattractants and activators for neutrophils. TC-1 and TC-2 are antibacterial proteins, in vitro released from activated platelet alpha-granules. CTAP-III(1-81) is more potent than CTAP-III desensitize chemokine-induced neutrophil activation. The protein is Platelet basic protein (PPBP) of Homo sapiens (Human).